Here is a 536-residue protein sequence, read N- to C-terminus: MAVASKKIPAPDEVRIKTALLSVSDKSGIVELARHLNDRGVRLVSTGGTHKALADAGLPVSDVSELTGFPEIMDGRVKTLHPGVHGGLLAIRDDAEHAGAMSAHGITAIDLAVINLYPFEEVRAKGGDYPTTVENIDIGGPAMIRASAKNHAYVTVVTDPADYPLLLEEIAGGTTRYAFRQKMAAKAYARTAAYDAAISNWFAEVLDTPMPRHRVIGGVLKEEMRYGENPHQKAGFYVTGDKRPGVATAALLQGKQLSYNNINDTDAAFELVAEFLPEKAPACAIIKHANPCGVATAPSLAEAYRRALACDSTSAFGGIIALNQELDAATAEEIVKLFTEVIIAPSVSDEAKAIIARKPNLRLLATGGLPDPRTPGLTAKTVAGGLLVQTRDDGMIEDIELKVVTKRTPTAQELEDMKFAFKVAKHVKSNAVVYAKGGQTAGIGAGQMSRVDSARIAAIKAEEAAKALGLAEPLTRGSAVASEAFLPFADGLLSAIAAGATAVIQPGGSMRDEEVIAAADEHNVAMVFTGMRHFRH.

Positions 8–158 constitute an MGS-like domain; the sequence is IPAPDEVRIK…KNHAYVTVVT (151 aa).

This sequence belongs to the PurH family.

It carries out the reaction (6R)-10-formyltetrahydrofolate + 5-amino-1-(5-phospho-beta-D-ribosyl)imidazole-4-carboxamide = 5-formamido-1-(5-phospho-D-ribosyl)imidazole-4-carboxamide + (6S)-5,6,7,8-tetrahydrofolate. The enzyme catalyses IMP + H2O = 5-formamido-1-(5-phospho-D-ribosyl)imidazole-4-carboxamide. It participates in purine metabolism; IMP biosynthesis via de novo pathway; 5-formamido-1-(5-phospho-D-ribosyl)imidazole-4-carboxamide from 5-amino-1-(5-phospho-D-ribosyl)imidazole-4-carboxamide (10-formyl THF route): step 1/1. The protein operates within purine metabolism; IMP biosynthesis via de novo pathway; IMP from 5-formamido-1-(5-phospho-D-ribosyl)imidazole-4-carboxamide: step 1/1. This chain is Bifunctional purine biosynthesis protein PurH, found in Sinorhizobium medicae (strain WSM419) (Ensifer medicae).